The primary structure comprises 110 residues: MSLSEARFHDLVDATQQALEDLFDESGMDLDMENSAGVLTVKFEGGAQLIFSRQEPLRQLWLADRSGGFHFDYDEESKKWVCEKSEELLGEMLERIVWERAGEKLDFDEI.

Belongs to the frataxin family.

Its function is as follows. Involved in iron-sulfur (Fe-S) cluster assembly. May act as a regulator of Fe-S biogenesis. The sequence is that of Iron-sulfur cluster assembly protein CyaY from Pseudomonas putida (strain GB-1).